A 344-amino-acid chain; its full sequence is Nuclear distribution protein nudE-like 1-A (344 aa).

Residues Y26 to R187 are a coiled coil. A compositionally biased stretch (basic and acidic residues) spans L181–V190. 2 disordered regions span residues L181–A209 and P322–V344.

Belongs to the nudE family. Post-translationally, phosphorylated in mitosis.

It is found in the cytoplasm. The protein localises to the cytoskeleton. It localises to the microtubule organizing center. Its subcellular location is the centrosome. The protein resides in the spindle. In terms of biological role, required for organization of the cellular microtubule array and microtubule anchoring at the centrosome. Positively regulates the activity of the minus-end directed microtubule motor protein dynein. May enhance dynein-mediated microtubule sliding by targeting dynein to the microtubule plus end. This is Nuclear distribution protein nudE-like 1-A (ndel1a) from Danio rerio (Zebrafish).